Here is a 292-residue protein sequence, read N- to C-terminus: Phosphatidylserine decarboxylase proenzyme (292 aa).

Catalysis depends on charge relay system; for autoendoproteolytic cleavage activity residues Asp-89, His-146, and Ser-252. Catalysis depends on Ser-252, which acts as the Schiff-base intermediate with substrate; via pyruvic acid; for decarboxylase activity. Residue Ser-252 is modified to Pyruvic acid (Ser); by autocatalysis.

This sequence belongs to the phosphatidylserine decarboxylase family. PSD-B subfamily. Prokaryotic type I sub-subfamily. As to quaternary structure, heterodimer of a large membrane-associated beta subunit and a small pyruvoyl-containing alpha subunit. Pyruvate is required as a cofactor. In terms of processing, is synthesized initially as an inactive proenzyme. Formation of the active enzyme involves a self-maturation process in which the active site pyruvoyl group is generated from an internal serine residue via an autocatalytic post-translational modification. Two non-identical subunits are generated from the proenzyme in this reaction, and the pyruvate is formed at the N-terminus of the alpha chain, which is derived from the carboxyl end of the proenzyme. The autoendoproteolytic cleavage occurs by a canonical serine protease mechanism, in which the side chain hydroxyl group of the serine supplies its oxygen atom to form the C-terminus of the beta chain, while the remainder of the serine residue undergoes an oxidative deamination to produce ammonia and the pyruvoyl prosthetic group on the alpha chain. During this reaction, the Ser that is part of the protease active site of the proenzyme becomes the pyruvoyl prosthetic group, which constitutes an essential element of the active site of the mature decarboxylase.

It localises to the cell membrane. The catalysed reaction is a 1,2-diacyl-sn-glycero-3-phospho-L-serine + H(+) = a 1,2-diacyl-sn-glycero-3-phosphoethanolamine + CO2. It functions in the pathway phospholipid metabolism; phosphatidylethanolamine biosynthesis; phosphatidylethanolamine from CDP-diacylglycerol: step 2/2. Its function is as follows. Catalyzes the formation of phosphatidylethanolamine (PtdEtn) from phosphatidylserine (PtdSer). The chain is Phosphatidylserine decarboxylase proenzyme from Shewanella sp. (strain MR-7).